A 295-amino-acid chain; its full sequence is Keratin-like protein KRT222 (295 aa).

The IF rod domain maps to 1-150; the sequence is MELSQLLNEI…HLLEKEEIRY (150 aa). Residues 2-150 are a coiled coil; sequence ELSQLLNEIR…HLLEKEEIRY (149 aa).

Belongs to the intermediate filament family.

This chain is Keratin-like protein KRT222 (KRT222), found in Homo sapiens (Human).